A 772-amino-acid chain; its full sequence is Tubulin monoglycylase TTLL3 (772 aa).

Residues 50-81 (PTLLPPQKDLDSSAMGDSDTTEDEDEDEDEEF) form a disordered region. Residues 68–81 (DTTEDEDEDEDEEF) are compositionally biased toward acidic residues. One can recognise a TTL domain in the interval 151-510 (ARNVLKLVVK…RMLDRNCDTG (360 aa)). Residues lysine 283, 289-290 (RG), 321-324 (QKYI), 334-336 (KFD), and 378-379 (CN) each bind ATP. Residue arginine 289 participates in a protein binding. Residue serine 381 participates in L-glutamate binding. Positions 456, 469, and 471 each coordinate Mg(2+). Position 469 (glutamate 469) interacts with ATP.

Mg(2+) serves as cofactor. In terms of tissue distribution, expressed in brain, heart, kidney, testis, liver, lung, muscle, spleen, trachea and colon.

It localises to the cytoplasm. The protein localises to the cytoskeleton. It is found in the cell projection. The protein resides in the cilium. Its subcellular location is the cilium axoneme. It localises to the flagellum axoneme. The enzyme catalyses L-glutamyl-[protein] + glycine + ATP = glycyl-L-glutamyl-[protein] + ADP + phosphate + H(+). Its function is as follows. Monoglycylase which modifies alpha- and beta-tubulin, adding a single glycine on the gamma-carboxyl groups of specific glutamate residues to generate monoglycine side chains within the C-terminal tail of tubulin. Not involved in elongation step of the polyglycylation reaction. Preferentially glycylates a beta-tail peptide over the alpha-tail, although shifts its preference toward alpha-tail as beta-tail glutamylation increases. Competes with polyglutamylases for modification site on beta-tubulin substrate, thereby creating an anticorrelation between glycylation and glutamylation reactions. Together with TTLL8, mediates microtubule glycylation of primary and motile cilia, which is essential for their stability and maintenance. Involved in microtubule glycylation of primary cilia in colon which controls cell proliferation of epithelial cells and plays an essential role in colon cancer development. Together with TTLL8, glycylates sperm flagella which regulates axonemal dynein motor activity, thereby controlling flagellar beat, directional sperm swimming and male fertility. The protein is Tubulin monoglycylase TTLL3 of Homo sapiens (Human).